Reading from the N-terminus, the 234-residue chain is tRNA1(Val) (adenine(37)-N6)-methyltransferase (234 aa).

Belongs to the methyltransferase superfamily. tRNA (adenine-N(6)-)-methyltransferase family.

The protein localises to the cytoplasm. It carries out the reaction adenosine(37) in tRNA1(Val) + S-adenosyl-L-methionine = N(6)-methyladenosine(37) in tRNA1(Val) + S-adenosyl-L-homocysteine + H(+). Its function is as follows. Specifically methylates the adenine in position 37 of tRNA(1)(Val) (anticodon cmo5UAC). The polypeptide is tRNA1(Val) (adenine(37)-N6)-methyltransferase (Phocaeicola vulgatus (strain ATCC 8482 / DSM 1447 / JCM 5826 / CCUG 4940 / NBRC 14291 / NCTC 11154) (Bacteroides vulgatus)).